The chain runs to 155 residues: Transcription antitermination protein NusB (155 aa).

It belongs to the NusB family.

Its function is as follows. Involved in transcription antitermination. Required for transcription of ribosomal RNA (rRNA) genes. Binds specifically to the boxA antiterminator sequence of the ribosomal RNA (rrn) operons. This chain is Transcription antitermination protein NusB, found in Halorhodospira halophila (strain DSM 244 / SL1) (Ectothiorhodospira halophila (strain DSM 244 / SL1)).